Reading from the N-terminus, the 644-residue chain is DNA gyrase subunit B (644 aa).

The 115-residue stretch at 429–543 folds into the Toprim domain; that stretch reads CEIFLVEGDS…AGYVYIAQPP (115 aa). Mg(2+)-binding residues include E435, D508, and D510.

Belongs to the type II topoisomerase GyrB family. As to quaternary structure, heterotetramer, composed of two GyrA and two GyrB chains. In the heterotetramer, GyrA contains the active site tyrosine that forms a transient covalent intermediate with DNA, while GyrB binds cofactors and catalyzes ATP hydrolysis. Mg(2+) is required as a cofactor. Mn(2+) serves as cofactor. The cofactor is Ca(2+).

It is found in the cytoplasm. It catalyses the reaction ATP-dependent breakage, passage and rejoining of double-stranded DNA.. A type II topoisomerase that negatively supercoils closed circular double-stranded (ds) DNA in an ATP-dependent manner to modulate DNA topology and maintain chromosomes in an underwound state. Negative supercoiling favors strand separation, and DNA replication, transcription, recombination and repair, all of which involve strand separation. Also able to catalyze the interconversion of other topological isomers of dsDNA rings, including catenanes and knotted rings. Type II topoisomerases break and join 2 DNA strands simultaneously in an ATP-dependent manner. The chain is DNA gyrase subunit B from Staphylococcus aureus (strain COL).